We begin with the raw amino-acid sequence, 1067 residues long: SURP and G-patch domain-containing protein 2 (1067 aa).

The residue at position 93 (Ser93) is a Phosphoserine. Over residues 177-189 (KESRDYDLDHPGE) the composition is skewed to basic and acidic residues. Residues 177–199 (KESRDYDLDHPGEVDSVSRSSGQ) are disordered. Phosphoserine is present on Ser206. Lys219 is covalently cross-linked (Glycyl lysine isopeptide (Lys-Gly) (interchain with G-Cter in SUMO2)). Thr265 carries the phosphothreonine modification. Residues Ser267 and Ser586 each carry the phosphoserine modification. An SURP motif 1 repeat occupies 573–616 (IDQLVMRVIQGRLSPRERTLLLQDPAYWFLSDESSLEYKYYKLK). The tract at residues 668–767 (SQGPRGLKAK…CPSANMDAKT (100 aa)) is disordered. Over residues 680–691 (TTAQQTSLSSGT) the composition is skewed to polar residues. At Ser740 the chain carries Phosphoserine. Thr744 is modified (phosphothreonine). The SURP motif 2 repeat unit spans residues 770–813 (TAEKLARFVAQVGPEIEQFSIENSTDNPDLWFLHDQSSSAFKFY). Positions 825 to 840 (SFQSTGEAGDSVQSPT) are enriched in polar residues. 2 disordered regions span residues 825–944 (SFQS…KSLK) and 967–991 (RIAY…EFSQ). Position 838 is a phosphoserine (Ser838). Residues 843–856 (KEGKGEPQEGHPEQ) are compositionally biased toward basic and acidic residues. Over residues 866-883 (LPEEEEEDEEESEDEGGE) the composition is skewed to acidic residues. Residues 919-931 (ASTPGLSQASSGS) are compositionally biased toward polar residues. Residues 975–984 (GRPIAKKKKP) show a composition bias toward basic residues. Residues 980-985 (KKKKPK) carry the Nuclear localization signal motif. The 47-residue stretch at 996–1042 (DKNVGFQMLQKMGWKEGHGLGSLGKGIREPVSVGALSEGEGLGADGP) folds into the G-patch domain.

It is found in the nucleus. In terms of biological role, may play a role in mRNA splicing. In Mus musculus (Mouse), this protein is SURP and G-patch domain-containing protein 2 (Sugp2).